The primary structure comprises 322 residues: Acetylglutamate kinase (322 aa).

Substrate is bound by residues 89–90 (GG), R111, and N217.

Belongs to the acetylglutamate kinase family. ArgB subfamily.

It localises to the cytoplasm. The catalysed reaction is N-acetyl-L-glutamate + ATP = N-acetyl-L-glutamyl 5-phosphate + ADP. It participates in amino-acid biosynthesis; L-arginine biosynthesis; N(2)-acetyl-L-ornithine from L-glutamate: step 2/4. Its function is as follows. Catalyzes the ATP-dependent phosphorylation of N-acetyl-L-glutamate. The chain is Acetylglutamate kinase from Ehrlichia ruminantium (strain Gardel).